We begin with the raw amino-acid sequence, 642 residues long: Probable glutamate--tRNA ligase, cytoplasmic (642 aa).

152–154 (RFP) is a binding site for L-glutamate. Positions 157-166 (PNGRLHIGHA) match the 'HIGH' region motif. Residue histidine 162 participates in ATP binding. Residues aspartate 188, 326 to 330 (YDFAC), and arginine 344 each bind L-glutamate. ATP is bound by residues glutamate 347 and 382-386 (VLSKR). Positions 382–386 (VLSKR) match the 'KMSKS' region motif.

This sequence belongs to the class-I aminoacyl-tRNA synthetase family. Glutamate--tRNA ligase type 2 subfamily.

Its subcellular location is the cytoplasm. The catalysed reaction is tRNA(Glu) + L-glutamate + ATP = L-glutamyl-tRNA(Glu) + AMP + diphosphate. The sequence is that of Probable glutamate--tRNA ligase, cytoplasmic from Encephalitozoon cuniculi (strain GB-M1) (Microsporidian parasite).